A 321-amino-acid chain; its full sequence is Probable membrane-associated kinase regulator 3 (321 aa).

The segment covering 297-314 has biased composition (polar residues); it reads KSNVTESELCSSRTSVST. Residues 297 to 321 are disordered; the sequence is KSNVTESELCSSRTSVSTCGDLDKD.

The protein localises to the cell membrane. The sequence is that of Probable membrane-associated kinase regulator 3 (MAKR3) from Arabidopsis thaliana (Mouse-ear cress).